The following is a 638-amino-acid chain: Phenylethylamine oxidase (638 aa).

Residues 1-2 constitute a propeptide that is removed on maturation; sequence MT. Residue 296–307 participates in substrate binding; that stretch reads YFDTGEYLVGQY. Catalysis depends on D298, which acts as the Proton acceptor. C317 and C343 form a disulfide bridge. Substrate is bound at residue 379–384; that stretch reads IGNYDY. Y382 functions as the Schiff-base intermediate with substrate; via topaquinone in the catalytic mechanism. The residue at position 382 (Y382) is a 2',4',5'-topaquinone. Residues H431, H433, and H592 each contribute to the Cu cation site.

This sequence belongs to the copper/topaquinone oxidase family. As to quaternary structure, homodimer. Requires Cu cation as cofactor. L-topaquinone is required as a cofactor. Post-translationally, topaquinone (TPQ) is generated by copper-dependent autoxidation of a specific tyrosyl residue.

It catalyses the reaction a primary methyl amine + O2 + H2O = an aldehyde + H2O2 + NH4(+). The catalysed reaction is 2-phenylethylamine + O2 + H2O = 2-phenylacetaldehyde + H2O2 + NH4(+). In terms of biological role, catalyzes the oxidative deamination of phenylethylamine to phenylacetaldehyde with the concomitant production of hydrogen peroxide and ammonia. The polypeptide is Phenylethylamine oxidase (Arthrobacter globiformis).